Reading from the N-terminus, the 7094-residue chain is Replicase polyprotein 1ab (7094 aa).

The region spanning 54–196 is the CoV Nsp1 globular domain; sequence PENHVMVDCR…PWVMYLRKCG (143 aa). The region spanning 216 to 246 is the BetaCoV Nsp1 C-terminal domain; that stretch reads FKVEDAYDLVHDEPKGKFSKKAYALIRGYRG. The CoV Nsp2 N-terminal domain occupies 250-519; it reads LLYVDQYGCD…LICKALYLDY (270 aa). The Zn(2+) site is built by C392, C397, C413, and C416. Residues 392-416 form a C4 region; that stretch reads CEQDLCDFKGWVPGNMIDGFACTTC. Residues 524–713 enclose the CoV Nsp2 middle domain; it reads CGNLHQRELL…AQAFRSVAKV (190 aa). The region spanning 733 to 851 is the CoV Nsp2 C-terminal domain; it reads RRRICLSGSK…LDQAWRVPCA (119 aa). Positions 853 to 966 constitute a Ubiquitin-like 1 domain; that stretch reads RRVTFKEQPT…LYCAFTAPED (114 aa). Positions 1036–1274 constitute a Peptidase C16 1 domain; it reads DLESVIQDYE…IAQLYGSCIT (239 aa). C1074 serves as the catalytic For PL1-PRO activity. 4 residues coordinate Zn(2+): C1151, C1154, C1177, and C1179. The C4-type 1 zinc-finger motif lies at 1151-1179; the sequence is CIKCDLALKLKGLDAMFFYGDVVSHVCKC. Active-site for PL1-PRO activity residues include H1225 and D1236. The Macro domain maps to 1275–1435; it reads PNVCFVKGDI…LISKCQITAV (161 aa). One can recognise a DPUP domain in the interval 1491–1563; sequence DDARTFVQSN…VAQIKALFLD (73 aa). A Ubiquitin-like 2 domain is found at 1562–1617; the sequence is LDKVDILLTVDGVNFTNRFVPVGENFGKSLGNVFCDGVNVTKHKCDINYKGKVFFQ. The 262-residue stretch at 1631–1892 folds into the Peptidase C16 2 domain; that stretch reads SSFNFDQKEL…KIEYKPDLSQ (262 aa). C1671 (for PL2-PRO activity) is an active-site residue. The Zn(2+) site is built by C1749, C1751, C1783, and C1785. A C4-type 2 zinc finger spans residues 1749–1785; it reads CKCGVKQEQRTGVDAVMHFGTLSREDLEIGYTVDCSC. Catalysis depends on for PL2-PRO activity residues H1828 and D1842. Residues 1906 to 2007 enclose the Nucleic acid-binding domain; sequence IKAQFKTFEK…TYFNRPLLVD (102 aa). The G2M domain occupies 2020 to 2169; the sequence is DDGGDISESD…ADNKVIYTTE (150 aa). The next 3 helical transmembrane spans lie at 2138 to 2158, 2199 to 2219, and 2227 to 2247; these read ISAC…WIKI, ACII…NVIF, and IGFL…TFSL. The HD1 stretch occupies residues 2138-2385; sequence ISACFNFIKW…ASFIKLFSLF (248 aa). In terms of domain architecture, 3Ecto spans 2235 to 2296; sequence GKIAQWIKST…AIDVVQYEAD (62 aa). 2 disulfides stabilise this stretch: C2251/C2275 and C2266/C2272. Helical transmembrane passes span 2313 to 2333, 2343 to 2363, and 2365 to 2385; these read LIVS…LISI, LFML…ANML, and AHVF…FSLF. Residues 2383-2473 form a Y1 region; it reads SLFRHVAYGC…ELKRPIQPTD (91 aa). The CoV Nsp3 Y domain occupies 2383-2750; sequence SLFRHVAYGC…LTTPFSLKGG (368 aa). The Zn(2+) site is built by H2387, C2392, C2397, C2400, C2433, H2436, C2440, and C2443. Positions 2387 to 2400 are ZF1; the sequence is HVAYGCSKPGCLFC. The ZF2 stretch occupies residues 2433–2443; that stretch reads CSKHQWNCIDC. The tract at residues 2474 to 2566 is Y2; the sequence is VAYHTVTDVK…MVDKNLITTA (93 aa). Residues 2474-2750 are coV-Y; that stretch reads VAYHTVTDVK…LTTPFSLKGG (277 aa). The Y3 stretch occupies residues 2567-2649; that stretch reads NTGTSVTETM…DSVMSAVSAG (83 aa). Residues 2650 to 2750 form a Y4 region; the sequence is LELTDESCNN…LTTPFSLKGG (101 aa). Transmembrane regions (helical) follow at residues 2752-2772, 2824-2844, 3009-3029, 3031-3051, 3063-3083, 3090-3110, and 3115-3135; these read VFSY…IGLW, STFG…VAVV, VFDL…FLAL, ASSI…YYLI, IVFV…VFQV, VYAI…SVIM, and LVMY…SVVV. Residues 2752 to 3135 are HD2; sequence VFSYFVYVCF…FCLLYISVVV (384 aa). Positions 3149 to 3246 constitute a Nsp4C domain; the sequence is LGTSVRSDGT…TASVSTSFLQ (98 aa). The region spanning 3247 to 3549 is the Peptidase C30 domain; that stretch reads SGIVKMVNPT…YQQLAGIKLQ (303 aa). Active-site for 3CL-PRO activity residues include H3287 and C3391. 7 consecutive transmembrane segments (helical) span residues 3558–3578, 3588–3608, 3614–3634, 3657–3677, 3684–3704, 3711–3731, and 3755–3775; these read GIVC…TAFV, TNML…MLLV, YLTM…YLVV, TYTD…FVTL, LFSF…WYMG, ILLM…LSMA, and IVLV…GLFS. Residues 3558–3775 form an HD3 region; sequence GIVCWIMAST…IISCYWGLFS (218 aa). The RdRp Nsp7 cofactor domain maps to 3837–3925; sequence SKLTDVKCAN…DYAKDNTVLQ (89 aa). In terms of domain architecture, RdRp Nsp8 cofactor spans 3926 to 4122; sequence ALQSEFVNMA…HNEVSATVLQ (197 aa). One can recognise a Nsp9 ssRNA-binding domain in the interval 4123–4232; sequence NNELMPAKLK…GTISSTVRLQ (110 aa). One can recognise an ExoN/MTase coactivator domain in the interval 4233-4370; it reads AGTATEYASN…CVSTDTTVQS (138 aa). 8 residues coordinate Zn(2+): C4306, C4309, H4315, C4322, C4348, C4351, C4359, and C4361. Zinc fingers lie at residues 4306–4322 and 4348–4361; these read CIYC…DGLC and CQVC…SCSC. The NiRAN domain occupies 4375–4630; that stretch reads FLNRVRGTSV…DCELYVNNAY (256 aa). Residues N4578 and D4587 each coordinate Mn(2+). One can recognise a Nsp12 Interface domain in the interval 4631-4729; sequence RLFDLVQYDF…MNMDVDTHRY (99 aa). Zn(2+)-binding residues include H4660, C4666, C4671, C4675, and C4852. Residues 4730–5297 form the Nsp12 RNA-dependent RNA polymerase domain; that stretch reads RLSLKDLLLY…NMYLRSAVMQ (568 aa). Residues 4732–4946 are rdRp Fingers N-ter; it reads SLKDLLLYAA…HQKCLKSIAA (215 aa). The tract at residues 4947–4985 is rdRp Palm N-ter; that stretch reads TRGVPVVIGTTKFYGGWDDMLRRLIKDVDNPVLMGWDYP. In terms of domain architecture, RdRp catalytic spans 4977–5139; sequence PVLMGWDYPK…CYNSDYASKG (163 aa). Residues 4986-5044 form a rdRp Fingers C-ter region; that stretch reads KCDRAMPNILRIVSSLVLARKHEACCSQSDRFYRLANECAQVLSEIVMCGGCYYVKPGG. Positions 5007, 5010, and 5011 each coordinate Zn(2+). The rdRp Palm C-ter stretch occupies residues 5045-5180; that stretch reads TSSGDATTAF…NNGPHEFCSQ (136 aa). Catalysis depends on residues S5124, D5125, and D5126. The rdRp Thumb stretch occupies residues 5181 to 5297; sequence HTMLVKMDGD…NMYLRSAVMQ (117 aa). The CV ZBD domain maps to 5298 to 5410; sequence SVGACVVCSS…DDFNRIASCK (113 aa). Residues C5302, C5305, C5313, C5316, C5323, C5326, H5330, H5336, C5347, C5352, C5369, and H5372 each contribute to the Zn(2+) site. Positions 5553–5734 constitute a (+)RNA virus helicase ATP-binding domain; it reads SVLETFQNNV…MCCLGPDIFL (182 aa). 5578 to 5585 lines the ATP pocket; the sequence is GPPGTGKS. Residues 5735–5904 form the (+)RNA virus helicase C-terminal domain; that stretch reads GTCYRCPKEI…VETRVQCSTN (170 aa). The region spanning 5971–6186 is the ExoN domain; it reads LFITKEEAVK…RCLAVYDCFC (216 aa). Active-site residues include D5989, E5991, and E6090. 7 residues coordinate Zn(2+): C6106, C6109, C6125, H6128, H6156, C6160, and H6163. Active-site residues include H6167 and D6172. C6178 is a binding site for Zn(2+). Residues 6195–6421 enclose the N7-MTase domain; the sequence is YPIISNELSI…NLWNTFTKLQ (227 aa). 6230–6236 contributes to the S-adenosyl-L-methionine binding site; sequence DIGNPKA. Positions 6308 to 6322 are gpppA-binding; sequence CNGGSLYVNKHAFHT. Zn(2+) contacts are provided by C6346, C6367, C6378, and H6381. Residues 6422–6482 enclose the Nsp15 N-terminal oligomerization domain; it reads SLENVVYNLV…NVAVELFAKR (61 aa). The AV-Nsp11N/CoV-Nsp15M domain maps to 6483–6603; the sequence is SIRHHPELKL…FAVRKEGQDV (121 aa). Residues 6653–6792 form the NendoU domain; the sequence is TCRTDMEKDF…NDEKVMTFYP (140 aa). Catalysis depends on residues H6683, H6698, K6738, K6841, D6925, K6965, and E6998. In terms of domain architecture, Nidovirus-type SAM-dependent 2'-O-MTase spans 6797–7091; that stretch reads ASDWKPGYSM…KEVFVGDSLV (295 aa).

It belongs to the coronaviruses polyprotein 1ab family. As to quaternary structure, interacts with host PHB and PHB2. In terms of assembly, interacts with papain-like protease nsp3 and non-structural protein 6. Monomer. Homodimer. Only the homodimer shows catalytic activity. As to quaternary structure, interacts with nsp8 and nsp12 to form the replication-transcription complex (RTC): nsp12, nsp7, two subunits of nsp8, and up to two subunits of nsp13. In terms of assembly, interacts with nsp7, nsp13 and nsp12 to form the replication-transcription complex (RTC): nsp12, nsp7, two subunits of nsp8, and up to two subunits of nsp13. Interacts with nsp12. As to quaternary structure, interacts with proofreading exoribonuclease nsp14 and 2'-O-methyltransferase nsp16; these interactions enhance nsp14 and nsp16 enzymatic activities. In terms of assembly, interacts with nsp7 and nsp8 to form the replication-transcription complex (RTC): nsp12, nsp7, two subunits of nsp8, and up to two subunits of nsp13. Interacts with nsp9. Interacts with nsp8 to form the replication-transcription complex (RTC): nsp12, nsp7, two subunits of nsp8, and up to two subunits of nsp13. The cofactor is Mn(2+). It depends on Mg(2+) as a cofactor. In terms of processing, specific enzymatic cleavages in vivo by its own proteases yield mature proteins. 3CL-PRO and PL-PRO proteinases are autocatalytically processed.

The protein localises to the host membrane. The protein resides in the host cytoplasm. Its subcellular location is the host perinuclear region. It is found in the host endoplasmic reticulum-Golgi intermediate compartment. It catalyses the reaction RNA(n) + a ribonucleoside 5'-triphosphate = RNA(n+1) + diphosphate. The enzyme catalyses ATP + H2O = ADP + phosphate + H(+). It carries out the reaction Thiol-dependent hydrolysis of ester, thioester, amide, peptide and isopeptide bonds formed by the C-terminal Gly of ubiquitin (a 76-residue protein attached to proteins as an intracellular targeting signal).. The catalysed reaction is a 5'-end (N(7)-methyl 5'-triphosphoguanosine)-ribonucleoside in mRNA + S-adenosyl-L-methionine = a 5'-end (N(7)-methyl 5'-triphosphoguanosine)-(2'-O-methyl-ribonucleoside) in mRNA + S-adenosyl-L-homocysteine + H(+). It catalyses the reaction uridylyl-uridylyl-ribonucleotide-RNA = a 3'-end uridylyl-2',3'-cyclophospho-uridine-RNA + a 5'-end dephospho-ribonucleoside-RNA. The enzyme catalyses a 5'-end diphospho-ribonucleoside in mRNA + GTP + H(+) = a 5'-end (5'-triphosphoguanosine)-ribonucleoside in mRNA + diphosphate. It carries out the reaction a 5'-end (5'-triphosphoguanosine)-ribonucleoside in mRNA + S-adenosyl-L-methionine = a 5'-end (N(7)-methyl 5'-triphosphoguanosine)-ribonucleoside in mRNA + S-adenosyl-L-homocysteine. In terms of biological role, the replicase polyprotein of coronaviruses is a multifunctional protein: it contains the activities necessary for the transcription of negative stranded RNA, leader RNA, subgenomic mRNAs and progeny virion RNA as well as proteinases responsible for the cleavage of the polyprotein into functional products. Inhibits host translation by interacting with the 40S ribosomal subunit. The nsp1-40S ribosome complex further induces an endonucleolytic cleavage near the 5'UTR of host mRNAs, targeting them for degradation. Viral mRNAs are not susceptible to nsp1-mediated endonucleolytic RNA cleavage thanks to the presence of a 5'-end leader sequence and are therefore protected from degradation. By suppressing host gene expression, nsp1 facilitates efficient viral gene expression in infected cells and evasion from host immune response. Its function is as follows. May play a role in the modulation of host cell survival signaling pathway by interacting with host PHB and PHB2. Indeed, these two proteins play a role in maintaining the functional integrity of the mitochondria and protecting cells from various stresses. Functionally, responsible for the cleavages located at the N-terminus of the replicase polyprotein. In addition, PL-PRO possesses a deubiquitinating/deISGylating activity and processes both 'Lys-48'- and 'Lys-63'-linked polyubiquitin chains from cellular substrates. Participates together with nsp4 in the assembly of virally-induced cytoplasmic double-membrane vesicles necessary for viral replication. Antagonizes innate immune induction of type I interferon by blocking the phosphorylation, dimerization and subsequent nuclear translocation of host IRF3. Also prevents host NF-kappa-B signaling. In terms of biological role, participates in the assembly of virally-induced cytoplasmic double-membrane vesicles necessary for viral replication. Cleaves the C-terminus of replicase polyprotein at 11 sites. Recognizes substrates containing the core sequence [ILMVF]-Q-|-[SGACN]. Also able to bind an ADP-ribose-1''-phosphate (ADRP). Its function is as follows. Plays a role in the initial induction of autophagosomes from host endoplasmic reticulum. Later, limits the expansion of these phagosomes that are no longer able to deliver viral components to lysosomes. Functionally, forms a hexadecamer with nsp8 (8 subunits of each) that may participate in viral replication by acting as a primase. Alternatively, may synthesize substantially longer products than oligonucleotide primers. In terms of biological role, forms a hexadecamer with nsp7 (8 subunits of each) that may participate in viral replication by acting as a primase. Alternatively, may synthesize substantially longer products than oligonucleotide primers. Forms a primer, NSP9-pU, which is utilized by the polymerase for the initiation of RNA chains. Interacts with ribosome signal recognition particle RNA (SRP). Together with NSP8, suppress protein integration into the cell membrane, thereby disrupting host immune defenses. Its function is as follows. Plays a pivotal role in viral transcription by stimulating both nsp14 3'-5' exoribonuclease and nsp16 2'-O-methyltransferase activities. Therefore plays an essential role in viral mRNAs cap methylation. Functionally, RNA-directed RNA polymerase that catalyzes the transcription of viral genomic and subgenomic RNAs. Acts in complex with nsp7 and nsp8 to transcribe both the minus and positive strands of genomic RNA. The kinase-like NiRAN domain of NSP12 attaches one or more nucleotides to the amino terminus of NSP9, forming a covalent RNA-protein intermediate that serves as transcription/replication primer. Subgenomic RNAs (sgRNAs) are formed by discontinuous transcription: The polymerase has the ability to pause at transcription-regulating sequences (TRS) and jump to the leader TRS, resulting in a major deletion. This creates a series of subgenomic RNAs that are replicated, transcribed and translated. In addition, Nsp12 is a subunit of the viral RNA capping enzyme that catalyzes the RNA guanylyltransferase reaction for genomic and sub-genomic RNAs. Subsequently, the NiRAN domain transfers RNA to GDP, and forms the core cap structure GpppA-RNA. In terms of biological role, multi-functional protein with a zinc-binding domain in N-terminus displaying RNA and DNA duplex-unwinding activities with 5' to 3' polarity. Activity of helicase is dependent on magnesium. Plays a role in viral RNA synthesis through two distinct activities. The N7-guanine methyltransferase activity plays a role in the formation of the cap structure GpppA-RNA. The proofreading exoribonuclease reduces the sensitivity of the virus to RNA mutagens during replication. This activity acts on both ssRNA and dsRNA in a 3'-5' direction. Its function is as follows. Plays a role in viral transcription/replication and prevents the simultaneous activation of host cell dsRNA sensors, such as MDA5/IFIH1, OAS, and PKR. Acts by degrading the 5'-polyuridines generated during replication of the poly(A) region of viral genomic and subgenomic RNAs. Catalyzes a two-step reaction in which a 2'3'-cyclic phosphate (2'3'-cP) is first generated by 2'-O transesterification, which is then hydrolyzed to a 3'-phosphate (3'-P). If not degraded, poly(U) RNA would hybridize with poly(A) RNA tails and activate host dsRNA sensors. Functionally, methyltransferase that mediates mRNA cap 2'-O-ribose methylation to the 5'-cap structure of viral mRNAs. N7-methyl guanosine cap is a prerequisite for binding of nsp16. Therefore plays an essential role in viral mRNAs cap methylation which is essential to evade immune system. This Bos taurus (Bovine) protein is Replicase polyprotein 1ab (rep).